The sequence spans 335 residues: Anthranilate phosphoribosyltransferase (335 aa).

Residues Gly79, Gly82 to Asp83, Thr87, Asn89 to Thr92, Lys107 to Ser115, and Ser119 contribute to the 5-phospho-alpha-D-ribose 1-diphosphate site. An anthranilate-binding site is contributed by Gly79. Residue Ser91 participates in Mg(2+) binding. Arg165 serves as a coordination point for anthranilate. Asp223 and Glu224 together coordinate Mg(2+).

This sequence belongs to the anthranilate phosphoribosyltransferase family. Homodimer. Mg(2+) is required as a cofactor.

The catalysed reaction is N-(5-phospho-beta-D-ribosyl)anthranilate + diphosphate = 5-phospho-alpha-D-ribose 1-diphosphate + anthranilate. The protein operates within amino-acid biosynthesis; L-tryptophan biosynthesis; L-tryptophan from chorismate: step 2/5. Functionally, catalyzes the transfer of the phosphoribosyl group of 5-phosphorylribose-1-pyrophosphate (PRPP) to anthranilate to yield N-(5'-phosphoribosyl)-anthranilate (PRA). The protein is Anthranilate phosphoribosyltransferase of Helicobacter pylori (strain G27).